We begin with the raw amino-acid sequence, 538 residues long: MPKILKFNEEARRALERGVDKVANAVKVTLGPKGRNVVIEKSWGSPTITNDGVSIAKEIELEDKFENLGAQLVKEVASKTNDVAGDGTTTATVLAQAMIKEGLKNVAAGANPILLKRGIDKAVEKAVEEIKKVSKKLSGREDIAHVAAISANSAEIGELIAEAMDKVGEDGVITVEDSKTLETYVEFTEGMQFDRGYISPYFVTDAEKMEVVLKEPFILITDRKLSAVKPLIPILEKVAQTGRPLLVIAEDVEGEVLTTLVLNKLKGTLQSCAVKAPGFGERRKAMLQDIAILTGGQVASEELGINLEDLTLEDLGRADLVRVKKDETIIIGGKGDPEAIKKRIAQIKAQIEETTSEYEKETLQERMAKLAGGVAVIKVGAATETELKEKKHRIEDALSATRAAVEEGIVPGGGVTLLRARKAVEKVIEELEGDEKIGAQIVYKALSAPIKQIAENAGYDGAVIIEKILSNDDPAYGFDALRGEYCNMFERGIIDPAKVTRSALQNAASIAGMLLTTEVLIVEKPEEKKETPSIPEEF.

Residues 29 to 32 (TLGP), 86 to 90 (DGTTT), glycine 413, 479 to 481 (DAL), and aspartate 495 contribute to the ATP site.

This sequence belongs to the chaperonin (HSP60) family. As to quaternary structure, forms a cylinder of 14 subunits composed of two heptameric rings stacked back-to-back. Interacts with the co-chaperonin GroES.

The protein localises to the cytoplasm. It catalyses the reaction ATP + H2O + a folded polypeptide = ADP + phosphate + an unfolded polypeptide.. Its function is as follows. Together with its co-chaperonin GroES, plays an essential role in assisting protein folding. The GroEL-GroES system forms a nano-cage that allows encapsulation of the non-native substrate proteins and provides a physical environment optimized to promote and accelerate protein folding. The protein is Chaperonin GroEL of Thermotoga petrophila (strain ATCC BAA-488 / DSM 13995 / JCM 10881 / RKU-1).